Here is a 150-residue protein sequence, read N- to C-terminus: Protein-arginine-phosphatase (150 aa).

Cys7 acts as the Nucleophile in catalysis. 8 to 13 is a binding site for substrate; sequence TGNTCR. Arg13 is a catalytic residue. Residue Asp118 is the Proton donor/acceptor of the active site.

Belongs to the low molecular weight phosphotyrosine protein phosphatase family.

It catalyses the reaction N(omega)-phospho-L-arginyl-[protein] + H2O = L-arginyl-[protein] + phosphate. Its activity is regulated as follows. Efficiently inhibited by Cu(2+) ion, Zn(2+) ion, sodium pyrophosphate and N-ethylmaleimide, while the addition of Mg(2+), Ca(2+) or Fe(3+) ions has minimal effect. Inhibited in a competitive manner by vanadate. Catalyzes the specific dephosphorylation of phosphoarginine residues in a large number of proteins. Counteracts the protein arginine kinase McsB in vivo. Can dephosphorylate CtsR-P; thus, can restore the DNA-binding ability of the CtsR repressor by reversing the McsB-mediated phosphorylation. Is the only active pArg phosphatase present in B.subtilis. Exhibits almost no activity against pSer, pThr, or pTyr peptides. Appears to play a role in B.subtilis stress resistance. Protein arginine phosphorylation has a physiologically important role and is involved in the regulation of many critical cellular processes, such as protein homeostasis, motility, competence, and stringent and stress responses, by regulating gene expression and protein activity. The polypeptide is Protein-arginine-phosphatase (ywlE) (Bacillus subtilis (strain 168)).